A 549-amino-acid chain; its full sequence is Glucose-6-phosphate isomerase (549 aa).

Residues lysine 80, lysine 228, and lysine 234 each carry the N6-acetyllysine modification. Glutamate 355 functions as the Proton donor in the catalytic mechanism. Residues histidine 386 and lysine 514 contribute to the active site.

Belongs to the GPI family.

The protein localises to the cytoplasm. The enzyme catalyses alpha-D-glucose 6-phosphate = beta-D-fructose 6-phosphate. Its pathway is carbohydrate biosynthesis; gluconeogenesis. It functions in the pathway carbohydrate degradation; glycolysis; D-glyceraldehyde 3-phosphate and glycerone phosphate from D-glucose: step 2/4. Functionally, catalyzes the reversible isomerization of glucose-6-phosphate to fructose-6-phosphate. This is Glucose-6-phosphate isomerase from Shigella flexneri serotype 5b (strain 8401).